Here is a 274-residue protein sequence, read N- to C-terminus: Large ribosomal subunit protein uL2 (274 aa).

The segment at 195 to 274 (VGNSDHGLES…SKYIIERRKK (80 aa)) is disordered. Composition is skewed to basic residues over residues 209 to 220 (GRSRWQGRRPRN) and 244 to 264 (PRSR…KKQS).

It belongs to the universal ribosomal protein uL2 family. As to quaternary structure, part of the 50S ribosomal subunit. Forms a bridge to the 30S subunit in the 70S ribosome.

Its function is as follows. One of the primary rRNA binding proteins. Required for association of the 30S and 50S subunits to form the 70S ribosome, for tRNA binding and peptide bond formation. It has been suggested to have peptidyltransferase activity; this is somewhat controversial. Makes several contacts with the 16S rRNA in the 70S ribosome. This Bacteroides fragilis (strain ATCC 25285 / DSM 2151 / CCUG 4856 / JCM 11019 / LMG 10263 / NCTC 9343 / Onslow / VPI 2553 / EN-2) protein is Large ribosomal subunit protein uL2.